The following is a 265-amino-acid chain: Cytochrome c oxidase subunit 3 (265 aa).

The next 6 membrane-spanning stretches (helical) occupy residues 16–36 (PWPI…VMYM), 41–61 (GGAT…FVWW), 84–104 (YGSI…FWAS), 162–182 (AVYA…FQGM), 200–220 (FLLA…FLIV), and 242–262 (AWYW…IYWW).

It belongs to the cytochrome c oxidase subunit 3 family. In terms of assembly, component of the cytochrome c oxidase (complex IV, CIV), a multisubunit enzyme composed of a catalytic core of 3 subunits and several supernumerary subunits. The complex exists as a monomer or a dimer and forms supercomplexes (SCs) in the inner mitochondrial membrane with ubiquinol-cytochrome c oxidoreductase (cytochrome b-c1 complex, complex III, CIII).

It localises to the mitochondrion inner membrane. It catalyses the reaction 4 Fe(II)-[cytochrome c] + O2 + 8 H(+)(in) = 4 Fe(III)-[cytochrome c] + 2 H2O + 4 H(+)(out). Its function is as follows. Component of the cytochrome c oxidase, the last enzyme in the mitochondrial electron transport chain which drives oxidative phosphorylation. The respiratory chain contains 3 multisubunit complexes succinate dehydrogenase (complex II, CII), ubiquinol-cytochrome c oxidoreductase (cytochrome b-c1 complex, complex III, CIII) and cytochrome c oxidase (complex IV, CIV), that cooperate to transfer electrons derived from NADH and succinate to molecular oxygen, creating an electrochemical gradient over the inner membrane that drives transmembrane transport and the ATP synthase. Cytochrome c oxidase is the component of the respiratory chain that catalyzes the reduction of oxygen to water. Electrons originating from reduced cytochrome c in the intermembrane space (IMS) are transferred via the dinuclear copper A center (CU(A)) of subunit 2 and heme A of subunit 1 to the active site in subunit 1, a binuclear center (BNC) formed by heme A3 and copper B (CU(B)). The BNC reduces molecular oxygen to 2 water molecules using 4 electrons from cytochrome c in the IMS and 4 protons from the mitochondrial matrix. This Zea mays (Maize) protein is Cytochrome c oxidase subunit 3 (COX3).